The primary structure comprises 64 residues: Lantibiotic actagardine (64 aa).

Residues 1 to 45 (MSALAIEKSWKDVDLRDGATSHPAGLGFGELTFEDLREDRTIYAA) constitute a propeptide that is removed on maturation. Positions 46–51 (SSGWVC) form a cross-link, lanthionine (Ser-Cys). Cross-links (beta-methyllanthionine (Thr-Cys)) lie at residues 52–57 (TLTIEC) and 54–62 (TIECGTVIC). Positions 59–64 (TVICAC) form a cross-link, beta-methyllanthionine sulfoxide (Thr-Cys).

Belongs to the type B lantibiotic family. Post-translationally, maturation of lantibiotics involves the enzymatic conversion of Thr, and Ser into dehydrated AA by the enzyme garM and the formation of thioether bonds with cysteine. The 59-64 beta-methyllanthionine thioether bond is oxidized to a sulfoxide by the monooxygenase GarO. This is followed by membrane translocation and cleavage of the modified precursor. In terms of processing, the sulfoxide group of the 59-64 beta-methyllanthionine thioether bond is mildly important for activity, since the antibacterial activity of deoxyactagardine is marginally lower compared with oxidized actagardine.

In terms of biological role, has potent antibacterial activity against some Gram-positive bacteria. Has good antistreptococcal activity. Inhibits cell wall biosynthesis by binding to lipid II and blocking transglycosylation. This is Lantibiotic actagardine from Actinoplanes garbadinensis.